The primary structure comprises 220 residues: Vesicle-associated protein 2-1 (220 aa).

An N-acetylmethionine modification is found at M1. Residues 1–196 (MTGVGENQLI…RNSGNGLSLK (196 aa)) are Cytoplasmic-facing. T2 carries the post-translational modification N-acetylthreonine; in Vesicle-associated protein 2-1, N-terminally processed. Positions 9-129 (LISIQPDELK…TECKLKVSYI (121 aa)) constitute an MSP domain. The segment at 133–154 (TTQRSSESGATNGDGQSSETIS) is disordered. A coiled-coil region spans residues 153-188 (ISTIQRLKEERDAAVKQTQQLQHELETVRRRRNQRN). A helical; Anchor for type IV membrane protein membrane pass occupies residues 197–217 (LAAMVGLIGLIIGFILKLTLA).

This sequence belongs to the VAMP-associated protein (VAP) (TC 9.B.17) family.

It is found in the endoplasmic reticulum membrane. Its function is as follows. May play a role in vesicle trafficking. This chain is Vesicle-associated protein 2-1 (PVA21), found in Arabidopsis thaliana (Mouse-ear cress).